The chain runs to 173 residues: Crossover junction endodeoxyribonuclease RuvC (173 aa).

Active-site residues include Asp8, Glu67, and Asp139. Mg(2+)-binding residues include Asp8, Glu67, and Asp139.

It belongs to the RuvC family. As to quaternary structure, homodimer which binds Holliday junction (HJ) DNA. The HJ becomes 2-fold symmetrical on binding to RuvC with unstacked arms; it has a different conformation from HJ DNA in complex with RuvA. In the full resolvosome a probable DNA-RuvA(4)-RuvB(12)-RuvC(2) complex forms which resolves the HJ. Requires Mg(2+) as cofactor.

The protein resides in the cytoplasm. The catalysed reaction is Endonucleolytic cleavage at a junction such as a reciprocal single-stranded crossover between two homologous DNA duplexes (Holliday junction).. Functionally, the RuvA-RuvB-RuvC complex processes Holliday junction (HJ) DNA during genetic recombination and DNA repair. Endonuclease that resolves HJ intermediates. Cleaves cruciform DNA by making single-stranded nicks across the HJ at symmetrical positions within the homologous arms, yielding a 5'-phosphate and a 3'-hydroxyl group; requires a central core of homology in the junction. The consensus cleavage sequence is 5'-(A/T)TT(C/G)-3'. Cleavage occurs on the 3'-side of the TT dinucleotide at the point of strand exchange. HJ branch migration catalyzed by RuvA-RuvB allows RuvC to scan DNA until it finds its consensus sequence, where it cleaves and resolves the cruciform DNA. The protein is Crossover junction endodeoxyribonuclease RuvC of Serratia proteamaculans (strain 568).